The following is a 63-amino-acid chain: Adipokinetic prohormone type 1 (63 aa).

The first 22 residues, 1 to 22, serve as a signal peptide directing secretion; the sequence is MVQRCALVVLLVVAVAAALCSA. At glutamine 23 the chain carries Pyrrolidone carboxylic acid. Threonine 32 carries the post-translational modification Threonine amide.

It belongs to the AKH/HRTH/RPCH family.

It localises to the secreted. This hormone, released from cells in the corpora cardiaca, causes release of diglycerides from the fat body and stimulation of muscles to use these diglycerides as an energy source during energy-demanding processes. This is Adipokinetic prohormone type 1 from Locusta migratoria (Migratory locust).